We begin with the raw amino-acid sequence, 700 residues long: Elongation factor G 2 (700 aa).

The 283-residue stretch at glutamate 8 to valine 290 folds into the tr-type G domain. GTP is bound by residues alanine 17–threonine 24, aspartate 88–histidine 92, and asparagine 142–aspartate 145.

Belongs to the TRAFAC class translation factor GTPase superfamily. Classic translation factor GTPase family. EF-G/EF-2 subfamily.

The protein resides in the cytoplasm. Catalyzes the GTP-dependent ribosomal translocation step during translation elongation. During this step, the ribosome changes from the pre-translocational (PRE) to the post-translocational (POST) state as the newly formed A-site-bound peptidyl-tRNA and P-site-bound deacylated tRNA move to the P and E sites, respectively. Catalyzes the coordinated movement of the two tRNA molecules, the mRNA and conformational changes in the ribosome. The polypeptide is Elongation factor G 2 (Burkholderia mallei (strain ATCC 23344)).